We begin with the raw amino-acid sequence, 307 residues long: Type 2A encapsulin shell protein (307 aa).

Belongs to the encapsulin family. Family 2A subfamily. Homooligomeric. The encapsulin nanocompartment is formed by 60 subunits; monomers form pentamers which assemble to form shells. There are 12 charged pores where the pentamers meet as well as 3-fold axis channels and dimer channels.

It localises to the encapsulin nanocompartment. Functionally, shell component of a type 2A encapsulin nanocompartment. Forms encapsulin nanocompartments about 24 nm in diameter from 60 monomers. Probably encapsulates at least cysteine desulfurase (CyD) and allows passage of cysteine into its interior, probably involved in sulfur metabolism. In Mycobacterium avium, this protein is Type 2A encapsulin shell protein.